We begin with the raw amino-acid sequence, 397 residues long: Putative gustatory receptor 85a (397 aa).

At 1–56 (MYSLIEAQLLGGKLVNRVMASLRRIIQRSLGYFCALNGILDFNTDIGTGNLRRYRV) the chain is on the cytoplasmic side. A helical membrane pass occupies residues 57-77 (LFMYRLLHNFAVISLTLKFLF). Over 78–90 (DFTDHFKYIESST) the chain is Extracellular. The chain crosses the membrane as a helical span at residues 91–111 (LITVNFFTYFTLVFFALLSSM). At 112–151 (GSCYQWQNRILAVLKELKHQRDLSRHMGYRVPRSKQNSID) the chain is on the cytoplasmic side. Residues 152-172 (YLLFALTVLLILRLSIHLATF) traverse the membrane as a helical segment. The Extracellular portion of the chain corresponds to 173 to 186 (TLSARMGFNHPCNC). A helical membrane pass occupies residues 187–207 (FLPECMIFSMNYLLFAILAEI). The Cytoplasmic segment spans residues 208–268 (TRCWWSLQSG…RYVTLAYMAR (61 aa)). A helical transmembrane segment spans residues 269–289 (NLWSGIVAGYLLVRFVIGNGL). Topologically, residues 290–293 (QDVE) are extracellular. The chain crosses the membrane as a helical span at residues 294–314 (LVYLVFSFITCIQPLMLSLLV). The Cytoplasmic segment spans residues 315–375 (NSMTSTTGSL…FRINRSLAFR (61 aa)). The helical transmembrane segment at 376–396 (SASLILVHVLYMVQSDYISIT) threads the bilayer. Residue asparagine 397 is a topological domain, extracellular.

This sequence belongs to the insect chemoreceptor superfamily. Gustatory receptor (GR) family. Gr22e subfamily.

It is found in the cell membrane. Its function is as follows. Probable gustatory receptor which mediates acceptance or avoidance behavior, depending on its substrates. This chain is Putative gustatory receptor 85a (Gr85a), found in Drosophila melanogaster (Fruit fly).